Reading from the N-terminus, the 59-residue chain is Large ribosomal subunit protein uL30 (59 aa).

This sequence belongs to the universal ribosomal protein uL30 family. As to quaternary structure, part of the 50S ribosomal subunit.

The protein is Large ribosomal subunit protein uL30 of Clostridium botulinum (strain Alaska E43 / Type E3).